The primary structure comprises 1278 residues: NPC intracellular cholesterol transporter 1 (1278 aa).

Positions 1–22 are cleaved as a signal peptide; it reads MTARGLALGLLLLLLCPAQVFS. Residues 23–261 lie on the Lumenal side of the membrane; the sequence is QSCVWYGECG…QPPPPPAPWT (239 aa). 9 disulfide bridges follow: C25–C74, C31–C42, C63–C109, C75–C113, C97–C238, C100–C160, C177–C184, C227–C243, and C240–C247. N41 provides a ligand contact to cholesterol. Residue N70 is glycosylated (N-linked (GlcNAc...) asparagine). Cholesterol is bound at residue Q79. Residues N122 and N135 are each glycosylated (N-linked (GlcNAc...) asparagine). N158 carries an N-linked (GlcNAc...) asparagine; atypical glycan. The tract at residues 175-205 is important for cholesterol binding and cholesterol transfer from NPC1 to liposomes; the sequence is LLCGKDADACNATNWIEYMFNKDNGQAPFTI. N-linked (GlcNAc...) asparagine glycosylation is found at N185 and N222. A helical transmembrane segment spans residues 262 to 282; it reads ILGLDAMYVIMWITYMAFLLV. The Cytoplasmic segment spans residues 283–350; it reads FFGAFFAVWC…RWGSFCVRNP (68 aa). Residues 351–371 form a helical membrane-spanning segment; the sequence is GCVIFFSLVFITACSSGLVFV. Topologically, residues 372–620 are lumenal; the sequence is RVTTNPVDLW…DELNRESDSD (249 aa). Residues N452, N459, N478, N524, N557, N572, and N598 are each glycosylated (N-linked (GlcNAc...) asparagine). Disulfide bonds link C468-C479 and C516-C533. Positions 620-785 constitute an SSD domain; that stretch reads DVFTVVISYA…ITCFVSLLGL (166 aa). A helical membrane pass occupies residues 621–641; it reads VFTVVISYAIMFLYISLALGH. At 642 to 653 the chain is on the cytoplasmic side; it reads MKSCRRLLVDSK. The helical transmembrane segment at 654-675 threads the bilayer; sequence VSLGIAGILIVLSSVACSLGVF. The Lumenal portion of the chain corresponds to 676–685; that stretch reads SYIGLPLTLI. Residues 686–706 traverse the membrane as a helical segment; that stretch reads VIEVIPFLVLAVGVDNIFILV. Over 707–730 the chain is Cytoplasmic; it reads QAYQRDERLQGETLDQQLGRVLGE. The helical transmembrane segment at 731 to 751 threads the bilayer; it reads VAPSMFLSSFSETVAFFLGAL. Residues 752–759 are Lumenal-facing; the sequence is SVMPAVHT. The helical transmembrane segment at 760–783 threads the bilayer; the sequence is FSLFAGLAVFIDFLLQITCFVSLL. Residues 784–832 lie on the Cytoplasmic side of the membrane; the sequence is GLDIKRQEKNRLDIFCCVRGAEDGTSVQASESCLFRFFKNSYSPLLLKD. The chain crosses the membrane as a helical span at residues 833–853; the sequence is WMRPIVIAIFVGVLSFSIAVL. Residues 854-1097 are Lumenal-facing; it reads NKVDIGLDQS…YEQYLTIIDD (244 aa). The cysteines at positions 909 and 914 are disulfide-linked. N-linked (GlcNAc...) asparagine glycosylation is found at N916, N931, N961, N968, N1064, and N1072. 3 disulfides stabilise this stretch: C956–C1011, C957–C979, and C967–C976. Residues 1098–1118 traverse the membrane as a helical segment; that stretch reads TIFNLGVSLGAIFLVTMVLLG. Topologically, residues 1119 to 1124 are cytoplasmic; the sequence is CELWSA. A helical membrane pass occupies residues 1125–1145; the sequence is VIMCATIAMVLVNMFGVMWLW. The Lumenal portion of the chain corresponds to 1146-1150; that stretch reads GISLN. The chain crosses the membrane as a helical span at residues 1151-1171; the sequence is AVSLVNLVMSCGISVEFCSHI. The Cytoplasmic portion of the chain corresponds to 1172 to 1194; sequence TRAFTVSMKGSRVERAEEALAHM. The helical transmembrane segment at 1195-1215 threads the bilayer; sequence GSSVFSGITLTKFGGIVVLAF. Topologically, residues 1216–1223 are lumenal; it reads AKSQIFQI. The chain crosses the membrane as a helical span at residues 1224–1244; it reads FYFRMYLAMVLLGATHGLIFL. Topologically, residues 1245–1278 are cytoplasmic; sequence PVLLSYIGPSVNKAKSCATEERYKGTERERLLNF. The tract at residues 1275-1278 is required for location in lysosomes; it reads LLNF. Positions 1275-1278 match the Di-leucine motif motif; it reads LLNF.

The protein belongs to the patched family. As to quaternary structure, interacts (via the second lumenal domain) with NPC2. Interacts with TMEM97; the interaction may decrease NPC1 availability to the cell. Interacts with TIM1. Interacts with SLC38A9; this interaction inhibits cholesterol-mediated mTORC1 activation via its sterol transport activity. In terms of assembly, (Microbial infection) Interacts with ebolavirus glycoprotein. Post-translationally, N-glycosylated.

It localises to the late endosome membrane. Its subcellular location is the lysosome membrane. The catalysed reaction is cholesterol(in) = cholesterol(out). Intracellular cholesterol transporter which acts in concert with NPC2 and plays an important role in the egress of cholesterol from the endosomal/lysosomal compartment. Unesterified cholesterol that has been released from LDLs in the lumen of the late endosomes/lysosomes is transferred by NPC2 to the cholesterol-binding pocket in the N-terminal domain of NPC1. Cholesterol binds to NPC1 with the hydroxyl group buried in the binding pocket. Binds oxysterol with higher affinity than cholesterol. May play a role in vesicular trafficking in glia, a process that may be crucial for maintaining the structural and functional integrity of nerve terminals. Inhibits cholesterol-mediated mTORC1 activation throught its interaction with SLC38A9. Its function is as follows. (Microbial infection) Acts as an endosomal entry receptor for ebolavirus. The polypeptide is NPC intracellular cholesterol transporter 1 (Homo sapiens (Human)).